Reading from the N-terminus, the 107-residue chain is Small ribosomal subunit protein uS10m (107 aa).

This sequence belongs to the universal ribosomal protein uS10 family.

The protein resides in the mitochondrion. This is Small ribosomal subunit protein uS10m (RPS10) from Prototheca wickerhamii.